The sequence spans 126 residues: Holo-[acyl-carrier-protein] synthase (126 aa).

Mg(2+) contacts are provided by Asp-8 and Glu-59.

Belongs to the P-Pant transferase superfamily. AcpS family. The cofactor is Mg(2+).

Its subcellular location is the cytoplasm. It catalyses the reaction apo-[ACP] + CoA = holo-[ACP] + adenosine 3',5'-bisphosphate + H(+). In terms of biological role, transfers the 4'-phosphopantetheine moiety from coenzyme A to a Ser of acyl-carrier-protein. The protein is Holo-[acyl-carrier-protein] synthase of Rickettsia prowazekii (strain Madrid E).